We begin with the raw amino-acid sequence, 222 residues long: Gamma-glutamyl cyclotransferase gliK (222 aa).

Transmembrane regions (helical) follow at residues 154 to 174 (GWWF…AAII) and 187 to 207 (GHVP…MWAQ).

The protein belongs to the class-I pyridoxal-phosphate-dependent aminotransferase family.

It localises to the membrane. The enzyme catalyses an alpha-(gamma-L-glutamyl)-L-amino acid = 5-oxo-L-proline + an L-alpha-amino acid. Its pathway is secondary metabolite biosynthesis. Gamma-glutamyl cyclotransferase; part of the gene cluster that mediates the biosynthesis of an unusual class of epipolythiodioxopiperazines (ETPs) lacking the reactive thiol group important for toxicity. Firstly, L-tyrosine is prenylated by tcpD, before undergoing condensation with L-glycine in a reaction catalyzed by the NRPS tcpP leading to the diketopiperazine (DKP) backbone. Afterwards the alpha-carbon of tyrosine is oxidized by the cytochrome P450 tcpC to form a hydroxyl group. However, in contrast other ETP biosynthesis pathways studied so far, tcpC is not able to bishydroxylate the DKP at both alpha-carbon positions, but hydroxylates the alpha-carbon of the tyrosine part and the nitrogen of the glycine part. The next steps involve an alpha,beta-elimination reaction catalyzed by tcpI, a methylation by the methyltransferase tcpN the action of the four enzyme cascade tcpG/K/J/I. Due to a dysfunctional cytochrome P450 monooxygenase tcpC, the pathway leads to the biosynthesis of probable non-toxic metabolites lacking the reactive thiol group. The polypeptide is Gamma-glutamyl cyclotransferase gliK (Claviceps purpurea (strain 20.1) (Ergot fungus)).